Here is a 443-residue protein sequence, read N- to C-terminus: Ribosomal protein uS12 methylthiotransferase RimO (443 aa).

The 111-residue stretch at 8–118 (PKIGFVSLGC…VLSHIHHYVP (111 aa)) folds into the MTTase N-terminal domain. Residues C17, C53, C82, C150, C154, and C157 each contribute to the [4Fe-4S] cluster site. A Radical SAM core domain is found at 136–373 (LTPRHYAYLK…MQLQQQISTE (238 aa)). The 67-residue stretch at 376–442 (QEKIGKVLPV…EYDLWGTIVE (67 aa)) folds into the TRAM domain.

This sequence belongs to the methylthiotransferase family. RimO subfamily. [4Fe-4S] cluster serves as cofactor.

The protein localises to the cytoplasm. The catalysed reaction is L-aspartate(89)-[ribosomal protein uS12]-hydrogen + (sulfur carrier)-SH + AH2 + 2 S-adenosyl-L-methionine = 3-methylsulfanyl-L-aspartate(89)-[ribosomal protein uS12]-hydrogen + (sulfur carrier)-H + 5'-deoxyadenosine + L-methionine + A + S-adenosyl-L-homocysteine + 2 H(+). In terms of biological role, catalyzes the methylthiolation of an aspartic acid residue of ribosomal protein uS12. This Proteus mirabilis (strain HI4320) protein is Ribosomal protein uS12 methylthiotransferase RimO.